A 442-amino-acid polypeptide reads, in one-letter code: UDP-N-acetylmuramoylalanine--D-glutamate ligase (442 aa).

Residue 113-119 (GSNGKTT) coordinates ATP.

This sequence belongs to the MurCDEF family.

The protein resides in the cytoplasm. It catalyses the reaction UDP-N-acetyl-alpha-D-muramoyl-L-alanine + D-glutamate + ATP = UDP-N-acetyl-alpha-D-muramoyl-L-alanyl-D-glutamate + ADP + phosphate + H(+). It functions in the pathway cell wall biogenesis; peptidoglycan biosynthesis. Its function is as follows. Cell wall formation. Catalyzes the addition of glutamate to the nucleotide precursor UDP-N-acetylmuramoyl-L-alanine (UMA). The polypeptide is UDP-N-acetylmuramoylalanine--D-glutamate ligase (Coxiella burnetii (strain Dugway 5J108-111)).